A 377-amino-acid chain; its full sequence is Succinyl-diaminopimelate desuccinylase (377 aa).

His67 serves as a coordination point for Zn(2+). Residue Asp69 is part of the active site. Asp100 is a binding site for Zn(2+). Glu134 functions as the Proton acceptor in the catalytic mechanism. Residues Glu135, Glu163, and His349 each contribute to the Zn(2+) site.

The protein belongs to the peptidase M20A family. DapE subfamily. As to quaternary structure, homodimer. It depends on Zn(2+) as a cofactor. Co(2+) is required as a cofactor.

The catalysed reaction is N-succinyl-(2S,6S)-2,6-diaminopimelate + H2O = (2S,6S)-2,6-diaminopimelate + succinate. The protein operates within amino-acid biosynthesis; L-lysine biosynthesis via DAP pathway; LL-2,6-diaminopimelate from (S)-tetrahydrodipicolinate (succinylase route): step 3/3. Catalyzes the hydrolysis of N-succinyl-L,L-diaminopimelic acid (SDAP), forming succinate and LL-2,6-diaminopimelate (DAP), an intermediate involved in the bacterial biosynthesis of lysine and meso-diaminopimelic acid, an essential component of bacterial cell walls. This is Succinyl-diaminopimelate desuccinylase from Haemophilus influenzae (strain 86-028NP).